Consider the following 310-residue polypeptide: GMP synthase [glutamine-hydrolyzing] subunit B (310 aa).

Residues 2–185 (FDAKSFIEES…LGLPEKIAHR (184 aa)) form the GMPS ATP-PPase domain. 29-35 (SGGVDSS) serves as a coordination point for ATP.

Heterodimer composed of a glutamine amidotransferase subunit (A) and a GMP-binding subunit (B).

It catalyses the reaction XMP + L-glutamine + ATP + H2O = GMP + L-glutamate + AMP + diphosphate + 2 H(+). It functions in the pathway purine metabolism; GMP biosynthesis; GMP from XMP (L-Gln route): step 1/1. In terms of biological role, catalyzes the synthesis of GMP from XMP. This chain is GMP synthase [glutamine-hydrolyzing] subunit B, found in Methanococcus vannielii (strain ATCC 35089 / DSM 1224 / JCM 13029 / OCM 148 / SB).